Consider the following 108-residue polypeptide: Ribulose bisphosphate carboxylase small subunit (108 aa).

This sequence belongs to the RuBisCO small chain family. As to quaternary structure, heterohexadecamer of 8 large and 8 small subunits.

Functionally, ruBisCO catalyzes two reactions: the carboxylation of D-ribulose 1,5-bisphosphate, the primary event in carbon dioxide fixation, as well as the oxidative fragmentation of the pentose substrate. Both reactions occur simultaneously and in competition at the same active site. Although the small subunit is not catalytic it is essential for maximal activity. In Nitrobacter vulgaris, this protein is Ribulose bisphosphate carboxylase small subunit.